The following is a 174-amino-acid chain: Cytochrome c-type biogenesis protein CcmE (174 aa).

Over 1–8 (MNPRRKSR) the chain is Cytoplasmic. The helical; Signal-anchor for type II membrane protein transmembrane segment at 9-29 (LSVVLFILLGISVASALVLYA) threads the bilayer. Residues 30–174 (LRQNIDLFYT…QEKQFKEGNQ (145 aa)) lie on the Periplasmic side of the membrane. Residues His131 and Tyr135 each coordinate heme. A disordered region spans residues 149 to 174 (KPMGISDLKNESDRDRQEKQFKEGNQ). Basic and acidic residues predominate over residues 156 to 174 (LKNESDRDRQEKQFKEGNQ).

This sequence belongs to the CcmE/CycJ family.

The protein resides in the cell inner membrane. Functionally, heme chaperone required for the biogenesis of c-type cytochromes. Transiently binds heme delivered by CcmC and transfers the heme to apo-cytochromes in a process facilitated by CcmF and CcmH. This Histophilus somni (strain 2336) (Haemophilus somnus) protein is Cytochrome c-type biogenesis protein CcmE.